The following is a 240-amino-acid chain: UDP-2,3-diacylglucosamine hydrolase (240 aa).

The Mn(2+) site is built by Asp8, His10, Asp41, Asn78, and His113. Residue 78 to 79 (NR) participates in substrate binding. Residues Asp121, Ser159, Asn163, Lys166, and His194 each contribute to the substrate site. Mn(2+) is bound by residues His194 and His196.

This sequence belongs to the LpxH family. Mn(2+) is required as a cofactor.

Its subcellular location is the cell inner membrane. The enzyme catalyses UDP-2-N,3-O-bis[(3R)-3-hydroxytetradecanoyl]-alpha-D-glucosamine + H2O = 2-N,3-O-bis[(3R)-3-hydroxytetradecanoyl]-alpha-D-glucosaminyl 1-phosphate + UMP + 2 H(+). Its pathway is glycolipid biosynthesis; lipid IV(A) biosynthesis; lipid IV(A) from (3R)-3-hydroxytetradecanoyl-[acyl-carrier-protein] and UDP-N-acetyl-alpha-D-glucosamine: step 4/6. Hydrolyzes the pyrophosphate bond of UDP-2,3-diacylglucosamine to yield 2,3-diacylglucosamine 1-phosphate (lipid X) and UMP by catalyzing the attack of water at the alpha-P atom. Involved in the biosynthesis of lipid A, a phosphorylated glycolipid that anchors the lipopolysaccharide to the outer membrane of the cell. The sequence is that of UDP-2,3-diacylglucosamine hydrolase from Shewanella baltica (strain OS155 / ATCC BAA-1091).